The chain runs to 450 residues: Probable ECA polymerase (450 aa).

A run of 11 helical transmembrane segments spans residues 6–26, 37–57, 63–83, 118–138, 155–175, 181–201, 207–227, 228–248, 341–361, 378–398, and 410–430; these read FSGL…LTWF, VFFS…TSVL, VGVA…CFYA, VILM…NGFL, GVAL…VYFL, AWLF…MIVG, IIIA…ISLW, MLAA…LKRY, LVVM…GLII, YKAA…IVLA, and VFFI…YWLF.

This sequence belongs to the WzyE family. As to quaternary structure, probably part of a complex composed of WzxE, WzyE and WzzE.

It is found in the cell inner membrane. It functions in the pathway bacterial outer membrane biogenesis; enterobacterial common antigen biosynthesis. Its function is as follows. Probably involved in the polymerization of enterobacterial common antigen (ECA) trisaccharide repeat units. The protein is Probable ECA polymerase of Escherichia coli O17:K52:H18 (strain UMN026 / ExPEC).